The sequence spans 582 residues: MKRSMYAGHVREEHIGRTIVLKGWVSRRRDLGGLIFIDLRDREGVMQLVINPEDVSGDVMATAERLRSEYVIEVEGSVEARQQANDKLATGAVELKVSGLTILNTAKTTPFEIKDGVEVSDDMRLRYRYLDLRRPEMLESFKLRAKTTHVIRNYLDNLGFIDVETPMLTKSTPEGARDYLVPSRISQGHFYALPQSPQITKQLLMNAGFDRYYQIVKCFRDEDLRGDRQPEFTQVDLETSFLSEQEIQDIVEGMIAKVMKDTKGIEVKLPFPRMAYDDAMNHYGSDKPDTRFDMLLQDLTDLVKEVDFKVFSEAQAVKAIVVKGHADDYSRKDIDKLTEFAKQFGAKGLAWLKVVDGAFTGPIAKFLTGVESKLTESLQLEHNDLVLFVADTLEVANNTLGTLRTRIAKELDMIDMSQFHFLWVVDWPMFEWSEEEERYMSAHHPFTLPTQESAHELEGDLAKVRAVAYDIVLNGYELGGGSLRINQKDMQERMFKALGFTKEEASDQFGFLLEAMEYGFPPHGGLAIGLDRLVMLLAGKDNIREVIAFPKNNKASDPMTQAPSLVSEKQLEELQLQIEHHD.

L-aspartate is bound at residue E174. The segment at 198-201 (QITK) is aspartate. R220 lines the L-aspartate pocket. ATP contacts are provided by residues 220-222 (RDE) and Q229. H443 lines the L-aspartate pocket. Residue E477 coordinates ATP. R484 lines the L-aspartate pocket. 529–532 (GLDR) lines the ATP pocket.

It belongs to the class-II aminoacyl-tRNA synthetase family. Type 1 subfamily. Homodimer.

Its subcellular location is the cytoplasm. It carries out the reaction tRNA(Asp) + L-aspartate + ATP = L-aspartyl-tRNA(Asp) + AMP + diphosphate. Its function is as follows. Catalyzes the attachment of L-aspartate to tRNA(Asp) in a two-step reaction: L-aspartate is first activated by ATP to form Asp-AMP and then transferred to the acceptor end of tRNA(Asp). This Streptococcus equi subsp. zooepidemicus (strain MGCS10565) protein is Aspartate--tRNA ligase.